We begin with the raw amino-acid sequence, 522 residues long: Light-independent protochlorophyllide reductase subunit B (522 aa).

Aspartate 36 serves as a coordination point for [4Fe-4S] cluster. Residue aspartate 274 is the Proton donor of the active site. Position 409–410 (409–410 (GL)) interacts with substrate. The segment at 426 to 464 (DEAGPSHHGGKAVPASAPRAEATADEGSTPEEAVPPVAA) is disordered. A compositionally biased stretch (low complexity) spans 455–464 (PEEAVPPVAA).

Belongs to the ChlB/BchB/BchZ family. As to quaternary structure, protochlorophyllide reductase is composed of three subunits; BchL, BchN and BchB. Forms a heterotetramer of two BchB and two BchN subunits. The cofactor is [4Fe-4S] cluster.

It catalyses the reaction chlorophyllide a + oxidized 2[4Fe-4S]-[ferredoxin] + 2 ADP + 2 phosphate = protochlorophyllide a + reduced 2[4Fe-4S]-[ferredoxin] + 2 ATP + 2 H2O. The protein operates within porphyrin-containing compound metabolism; bacteriochlorophyll biosynthesis (light-independent). Functionally, component of the dark-operative protochlorophyllide reductase (DPOR) that uses Mg-ATP and reduced ferredoxin to reduce ring D of protochlorophyllide (Pchlide) to form chlorophyllide a (Chlide). This reaction is light-independent. The NB-protein (BchN-BchB) is the catalytic component of the complex. The chain is Light-independent protochlorophyllide reductase subunit B from Cereibacter sphaeroides (strain ATCC 17025 / ATH 2.4.3) (Rhodobacter sphaeroides).